The sequence spans 212 residues: Golgi-associated RAB2 interactor protein 5A (212 aa).

Disordered regions lie at residues 1-21 (MKGGRDLKAARGGADRPLAPA) and 162-212 (PFTH…LWGL). The segment covering 169-185 (APEEEEEEEEEEEEEEV) has biased composition (acidic residues).

The protein belongs to the GARIN family. Interacts (via N-terminus) with RAB2B (in GTP-bound form). As to expression, expressed in testis (at protein level).

The protein localises to the golgi apparatus. In terms of biological role, RAB2B effector protein which promotes cytosolic DNA-induced innate immune responses. Regulates IFN responses against DNA viruses by regulating the CGAS-STING signaling axis. The polypeptide is Golgi-associated RAB2 interactor protein 5A (Mus musculus (Mouse)).